We begin with the raw amino-acid sequence, 158 residues long: Regulator of sigma D (158 aa).

This sequence belongs to the Rsd/AlgQ family. Interacts with RpoD.

The protein localises to the cytoplasm. Its function is as follows. Binds RpoD and negatively regulates RpoD-mediated transcription activation by preventing the interaction between the primary sigma factor RpoD with the catalytic core of the RNA polymerase and with promoter DNA. May be involved in replacement of the RNA polymerase sigma subunit from RpoD to RpoS during the transition from exponential growth to the stationary phase. The protein is Regulator of sigma D of Escherichia coli O127:H6 (strain E2348/69 / EPEC).